The primary structure comprises 379 residues: Succinyl-diaminopimelate desuccinylase (379 aa).

Zn(2+) is bound at residue His-70. Asp-72 is a catalytic residue. Residue Asp-103 participates in Zn(2+) binding. Glu-137 functions as the Proton acceptor in the catalytic mechanism. Zn(2+) is bound by residues Glu-138, Glu-166, and His-352.

Belongs to the peptidase M20A family. DapE subfamily. As to quaternary structure, homodimer. It depends on Zn(2+) as a cofactor. Co(2+) is required as a cofactor.

The catalysed reaction is N-succinyl-(2S,6S)-2,6-diaminopimelate + H2O = (2S,6S)-2,6-diaminopimelate + succinate. Its pathway is amino-acid biosynthesis; L-lysine biosynthesis via DAP pathway; LL-2,6-diaminopimelate from (S)-tetrahydrodipicolinate (succinylase route): step 3/3. Functionally, catalyzes the hydrolysis of N-succinyl-L,L-diaminopimelic acid (SDAP), forming succinate and LL-2,6-diaminopimelate (DAP), an intermediate involved in the bacterial biosynthesis of lysine and meso-diaminopimelic acid, an essential component of bacterial cell walls. The polypeptide is Succinyl-diaminopimelate desuccinylase (Burkholderia vietnamiensis (strain G4 / LMG 22486) (Burkholderia cepacia (strain R1808))).